The sequence spans 282 residues: MGRVTERRKVIRIRDGAVSTRPDTLVAEEPLEIRLNGKPLAITMRTPGDDFALAAGFLVSEGVLAEQRDLQNIVYCAGATVDGSNTYNVVDVKTAPGVRIPDITLERNVYTTSSCGLCGKASLDAVRTTARWPIADTPPVRVTPELLADLPDRLRASQRVFDRTGGLHAAALFTEDGELVDVREDVGRHNAVDKLVGRALQNADLPLSRSVLLVSGRASFELAQKAVMAGIPVLAAVSAPSSLAVDLAAETGLTLVGFLRGSSMNVYAGADRVALRAAVGQG.

The active-site Cysteine persulfide intermediate is Cys115.

It belongs to the FdhD family.

The protein localises to the cytoplasm. Its function is as follows. Required for formate dehydrogenase (FDH) activity. Acts as a sulfur carrier protein that transfers sulfur from IscS to the molybdenum cofactor prior to its insertion into FDH. In Streptomyces coelicolor (strain ATCC BAA-471 / A3(2) / M145), this protein is Sulfur carrier protein FdhD.